A 448-amino-acid chain; its full sequence is tRNA-2-methylthio-N(6)-dimethylallyladenosine synthase (448 aa).

The region spanning 3–120 (KKLFIKTHGC…LPTMLDSRQG (118 aa)) is the MTTase N-terminal domain. Cysteine 12, cysteine 49, cysteine 83, cysteine 158, cysteine 162, and cysteine 165 together coordinate [4Fe-4S] cluster. The region spanning 144–376 (TSDGATAFVS…QERLNQQTMQ (233 aa)) is the Radical SAM core domain. The region spanning 379 to 444 (RRMVGNTERI…PNSLRGDLAS (66 aa)) is the TRAM domain.

The protein belongs to the methylthiotransferase family. MiaB subfamily. In terms of assembly, monomer. The cofactor is [4Fe-4S] cluster.

The protein localises to the cytoplasm. The catalysed reaction is N(6)-dimethylallyladenosine(37) in tRNA + (sulfur carrier)-SH + AH2 + 2 S-adenosyl-L-methionine = 2-methylsulfanyl-N(6)-dimethylallyladenosine(37) in tRNA + (sulfur carrier)-H + 5'-deoxyadenosine + L-methionine + A + S-adenosyl-L-homocysteine + 2 H(+). In terms of biological role, catalyzes the methylthiolation of N6-(dimethylallyl)adenosine (i(6)A), leading to the formation of 2-methylthio-N6-(dimethylallyl)adenosine (ms(2)i(6)A) at position 37 in tRNAs that read codons beginning with uridine. The sequence is that of tRNA-2-methylthio-N(6)-dimethylallyladenosine synthase from Chromohalobacter salexigens (strain ATCC BAA-138 / DSM 3043 / CIP 106854 / NCIMB 13768 / 1H11).